A 439-amino-acid polypeptide reads, in one-letter code: Ribosomal protein uS12 methylthiotransferase RimO (439 aa).

One can recognise an MTTase N-terminal domain in the interval 7–119; it reads KQLCLISLGC…IDILIAKKQN (113 aa). Residues Cys-16, Cys-50, Cys-82, Cys-151, Cys-155, and Cys-158 each coordinate [4Fe-4S] cluster. Residues 137 to 368 form the Radical SAM core domain; sequence TGSSVHAYVK…ALKHQNHSFK (232 aa).

Belongs to the methylthiotransferase family. RimO subfamily. The cofactor is [4Fe-4S] cluster.

It is found in the cytoplasm. The enzyme catalyses L-aspartate(89)-[ribosomal protein uS12]-hydrogen + (sulfur carrier)-SH + AH2 + 2 S-adenosyl-L-methionine = 3-methylsulfanyl-L-aspartate(89)-[ribosomal protein uS12]-hydrogen + (sulfur carrier)-H + 5'-deoxyadenosine + L-methionine + A + S-adenosyl-L-homocysteine + 2 H(+). Catalyzes the methylthiolation of an aspartic acid residue of ribosomal protein uS12. This is Ribosomal protein uS12 methylthiotransferase RimO from Helicobacter pylori (strain J99 / ATCC 700824) (Campylobacter pylori J99).